A 912-amino-acid polypeptide reads, in one-letter code: Protein translocase subunit SecA (912 aa).

Residues glutamine 87, 105 to 109, and aspartate 508 contribute to the ATP site; that span reads GEGKT. Positions 864 to 912 are disordered; it reads AEEEVEQMQGGNAPVPVSQVTRDEPKVGRNDPCPCGSGKKYKHCHGQLS. Cysteine 896, cysteine 898, cysteine 907, and histidine 908 together coordinate Zn(2+). Basic residues predominate over residues 902–912; it reads KKYKHCHGQLS.

The protein belongs to the SecA family. In terms of assembly, monomer and homodimer. Part of the essential Sec protein translocation apparatus which comprises SecA, SecYEG and auxiliary proteins SecDF-YajC and YidC. Zn(2+) serves as cofactor.

The protein localises to the cell inner membrane. It localises to the cytoplasm. It catalyses the reaction ATP + H2O + cellular proteinSide 1 = ADP + phosphate + cellular proteinSide 2.. In terms of biological role, part of the Sec protein translocase complex. Interacts with the SecYEG preprotein conducting channel. Has a central role in coupling the hydrolysis of ATP to the transfer of proteins into and across the cell membrane, serving both as a receptor for the preprotein-SecB complex and as an ATP-driven molecular motor driving the stepwise translocation of polypeptide chains across the membrane. This is Protein translocase subunit SecA from Xanthomonas euvesicatoria pv. vesicatoria (strain 85-10) (Xanthomonas campestris pv. vesicatoria).